A 465-amino-acid chain; its full sequence is Interferon-inducible GTPase 5 (465 aa).

One can recognise an IRG-type G domain in the interval 53-235; it reads TRLEVGVTGE…PLLMSTWERD (183 aa). GTP-binding positions include 62–69, 87–91, 169–171, and 216–218; these read ESGAGKSS, TGVVE, KVD, and SNL. A phosphoserine mark is found at Ser247 and Ser304. The interval 405–438 is disordered; sequence EEEEDTQPDVSLEAAGDNGVEKRGSGEGSMEEAP.

This sequence belongs to the TRAFAC class dynamin-like GTPase superfamily. IRG family.

The protein resides in the cell projection. It localises to the cilium. The protein localises to the flagellum. It is found in the lipid droplet. The catalysed reaction is GTP + H2O = GDP + phosphate + H(+). Its function is as follows. Required for sperm motility and therefore male fertility, via positive regulation of spermatozoa fibrous sheath formation. The chain is Interferon-inducible GTPase 5 (IRGC) from Bos taurus (Bovine).